The sequence spans 749 residues: Meiotically up-regulated gene 122 protein (749 aa).

The Cytoplasmic segment spans residues 1–20 (MYRKWDLCITRHLLPYIEHS). A helical; Signal-anchor for type II membrane protein membrane pass occupies residues 21–41 (VIPIIALLVLSLIFYILYICF). The Lumenal portion of the chain corresponds to 42-749 (GTTSYILSGI…LLSNALRSII (708 aa)). A PXA domain is found at 88 to 261 (PPELEAPLQL…CIILYFSSSE (174 aa)). Residues 311-422 (LHYQFLKEAS…KFFAKSMRSH (112 aa)) form the PX domain. Disordered stretches follow at residues 439 to 489 (QSSS…LSQQ) and 504 to 546 (GSCT…PPKP). 2 stretches are compositionally biased toward polar residues: residues 440–461 (SSSV…NKTS) and 475–489 (LSHQ…LSQQ).

Belongs to the sorting nexin family.

It is found in the endoplasmic reticulum membrane. Its function is as follows. Has a role in meiosis. This chain is Meiotically up-regulated gene 122 protein (mug122), found in Schizosaccharomyces pombe (strain 972 / ATCC 24843) (Fission yeast).